The sequence spans 119 residues: UPF0102 protein SGR_1878 (119 aa).

It belongs to the UPF0102 family.

This chain is UPF0102 protein SGR_1878, found in Streptomyces griseus subsp. griseus (strain JCM 4626 / CBS 651.72 / NBRC 13350 / KCC S-0626 / ISP 5235).